The primary structure comprises 219 residues: Proteasome subunit beta (219 aa).

Positions 1–14 (MISGSEYHKEYMKG) are cleaved as a propeptide — removed in mature form; by autocatalysis. The active-site Nucleophile is the Thr-15.

This sequence belongs to the peptidase T1B family. As to quaternary structure, the 20S proteasome core is composed of 14 alpha and 14 beta subunits that assemble into four stacked heptameric rings, resulting in a barrel-shaped structure. The two inner rings, each composed of seven catalytic beta subunits, are sandwiched by two outer rings, each composed of seven alpha subunits. The catalytic chamber with the active sites is on the inside of the barrel. Has a gated structure, the ends of the cylinder being occluded by the N-termini of the alpha-subunits. Is capped at one or both ends by the proteasome regulatory ATPase, PAN.

It localises to the cytoplasm. The catalysed reaction is Cleavage of peptide bonds with very broad specificity.. With respect to regulation, the formation of the proteasomal ATPase PAN-20S proteasome complex, via the docking of the C-termini of PAN into the intersubunit pockets in the alpha-rings, triggers opening of the gate for substrate entry. Interconversion between the open-gate and close-gate conformations leads to a dynamic regulation of the 20S proteasome proteolysis activity. Its function is as follows. Component of the proteasome core, a large protease complex with broad specificity involved in protein degradation. The sequence is that of Proteasome subunit beta from Methanococcus vannielii (strain ATCC 35089 / DSM 1224 / JCM 13029 / OCM 148 / SB).